A 337-amino-acid polypeptide reads, in one-letter code: 2-oxoglutarate receptor 1 (337 aa).

Residues 1–37 (MIETLDSPANDSDFLDYITALENCTDEQISFKMQYLP) are Extracellular-facing. N-linked (GlcNAc...) asparagine glycosylation occurs at Asn23. A helical membrane pass occupies residues 38-58 (VIYSIIFLVGFPGNTVAISIY). Topologically, residues 59 to 69 (VFKMRPWKSST) are cytoplasmic. A helical transmembrane segment spans residues 70 to 90 (IIMLNLALTDLLYLTSLPFLI). Residues 91 to 116 (HYYASGENWIFGDFMCKFIRFGFHFN) lie on the Extracellular side of the membrane. A disulfide bond links Cys106 and Cys183. Residues 117–137 (LYSSILFLTCFSLFRYIVIIH) form a helical membrane-spanning segment. Topologically, residues 138–151 (PMSCFSIQKTRWAV) are cytoplasmic. The chain crosses the membrane as a helical span at residues 152–172 (VACAGVWVISLVAVMPMTFLI). Residues 173-200 (TSTTRTNRSACLDLTSSDDLTTIKWYNL) lie on the Extracellular side of the membrane. A helical membrane pass occupies residues 201-221 (ILTATTFCLPLLIVTLCYTTI). Residues 222-242 (ISTLTHGPRTHSCFKQKARRL) lie on the Cytoplasmic side of the membrane. Residues 243-263 (TILLLLVFYVCFLPFHILRVI) form a helical membrane-spanning segment. The Extracellular portion of the chain corresponds to 264 to 284 (RIESRLLSISCSIESHIHEAY). A helical membrane pass occupies residues 285 to 305 (IVSRPLAALNTFGNLLLYVVV). Topologically, residues 306 to 337 (SNNFQQAFCSAVRCKAIGDLEQAKKDSCSNNP) are cytoplasmic.

Belongs to the G-protein coupled receptor 1 family. In terms of tissue distribution, highly expressed in mast cells and is found predominantly in the tissues of the respiratory tract and kidneys.

It is found in the cell membrane. Its function is as follows. G protein-coupled receptor for dicarboxylates and amino dicarboxylates. Receptor for itaconate, a metabolite produced by myeloid lineages. In the respiratory epithelium, couples the binding of itaconate to the activation of GNA11 and downstream intracellular Ca(2+) release, leading to mucocilliary clearance of airborne pathogens. Receptor for leukotriene E4 (LTE4) produced by mast cells upon allergic inflammation. Binds with high affinity to LTE4 and elicits mucin release from pulmonary epithelium in response to airborne fungi allergens. Regulates mucin-producing goblet cell homeostasis. Receptor for alpha-ketoglutarate produced by proximal tubule renal cells upon metabolic alkalosis. In an intrarenal paracrine signaling pathway, binds alpha-ketoglutarate and drives transepithelial salt reabsorption and bicarbonate secretion by SLC26A4/pendrin-positive intercalated cells. The protein is 2-oxoglutarate receptor 1 (Oxgr1) of Rattus norvegicus (Rat).